The sequence spans 157 residues: Large ribosomal subunit protein uL15 (157 aa).

The interval Met1 to Pro56 is disordered. Residues Ile23–Met35 are compositionally biased toward gly residues.

This sequence belongs to the universal ribosomal protein uL15 family. Part of the 50S ribosomal subunit.

Its function is as follows. Binds to the 23S rRNA. This Synechococcus sp. (strain JA-3-3Ab) (Cyanobacteria bacterium Yellowstone A-Prime) protein is Large ribosomal subunit protein uL15.